A 446-amino-acid chain; its full sequence is Tubulin beta chain (446 aa).

Gln11, Glu69, Ser138, Gly142, Thr143, Gly144, Asn204, and Asn226 together coordinate GTP. Glu69 contacts Mg(2+). The interval 421 to 446 is disordered; sequence EYQQYQDAGIDEEEEEYEEELPEGEE. Over residues 429-446 the composition is skewed to acidic residues; sequence GIDEEEEEYEEELPEGEE.

Belongs to the tubulin family. As to quaternary structure, dimer of alpha and beta chains. A typical microtubule is a hollow water-filled tube with an outer diameter of 25 nm and an inner diameter of 15 nM. Alpha-beta heterodimers associate head-to-tail to form protofilaments running lengthwise along the microtubule wall with the beta-tubulin subunit facing the microtubule plus end conferring a structural polarity. Microtubules usually have 13 protofilaments but different protofilament numbers can be found in some organisms and specialized cells. Mg(2+) serves as cofactor.

It is found in the cytoplasm. Its subcellular location is the cytoskeleton. Tubulin is the major constituent of microtubules, a cylinder consisting of laterally associated linear protofilaments composed of alpha- and beta-tubulin heterodimers. Microtubules grow by the addition of GTP-tubulin dimers to the microtubule end, where a stabilizing cap forms. Below the cap, tubulin dimers are in GDP-bound state, owing to GTPase activity of alpha-tubulin. This is Tubulin beta chain (TUB2) from Fusarium fujikuroi (Bakanae and foot rot disease fungus).